The sequence spans 368 residues: MTVTGIIAEFNPFHNGHKYLLETAEGLKIIAMSGNFMQRGEPALIDKWIRSEMALKNGADIVVELPFFVSVQSADYFAQGAIDILCQLGIQQLAFGTENVIDYQKLIKVYEKKSEQMTAYLSTLEDTLSYPQKTQKMWEIFAGVKFSGQTPNHILGLSYAKASAGKHIQLCPIKRQGAAYHSKDKNHLLASASAIRQHLNDWDFISHSVPNAGLLINNPHMSWDHYFSFLKYQILNHSDLTSIFQVNDELASRIKKAIKVSQNIDHLVDTVATKRYTKSRVRRILTYILVNAKEPTLPKGIHILGFTSKGQAHLKKLKKSRPLITRIGAETWDEMTQKADSIYQLGHQDIPEQSFGRIPIIIKNERLN.

ATP is bound by residues 7–20 (IAEF…HKYL), Gly-96, Asn-152, and Arg-175.

The protein belongs to the TmcAL family.

The protein localises to the cytoplasm. The enzyme catalyses cytidine(34) in elongator tRNA(Met) + acetate + ATP = N(4)-acetylcytidine(34) in elongator tRNA(Met) + AMP + diphosphate. In terms of biological role, catalyzes the formation of N(4)-acetylcytidine (ac(4)C) at the wobble position of elongator tRNA(Met), using acetate and ATP as substrates. First activates an acetate ion to form acetyladenylate (Ac-AMP) and then transfers the acetyl group to tRNA to form ac(4)C34. The sequence is that of tRNA(Met) cytidine acetate ligase from Streptococcus pyogenes serotype M49 (strain NZ131).